Consider the following 480-residue polypeptide: Glutamyl-tRNA(Gln) amidotransferase subunit A (480 aa).

Active-site charge relay system residues include Lys-74 and Ser-149. The active-site Acyl-ester intermediate is the Ser-173.

This sequence belongs to the amidase family. GatA subfamily. In terms of assembly, heterotrimer of A, B and C subunits.

It carries out the reaction L-glutamyl-tRNA(Gln) + L-glutamine + ATP + H2O = L-glutaminyl-tRNA(Gln) + L-glutamate + ADP + phosphate + H(+). Its function is as follows. Allows the formation of correctly charged Gln-tRNA(Gln) through the transamidation of misacylated Glu-tRNA(Gln) in organisms which lack glutaminyl-tRNA synthetase. The reaction takes place in the presence of glutamine and ATP through an activated gamma-phospho-Glu-tRNA(Gln). The polypeptide is Glutamyl-tRNA(Gln) amidotransferase subunit A (Prochlorococcus marinus (strain MIT 9312)).